The chain runs to 79 residues: Neurotoxin BmK-M9 (79 aa).

The N-terminal stretch at 1-14 (MISFALLLMTGVES) is a signal peptide. The region spanning 16-78 (RDAYIAKPEN…VPIRVPGKCH (63 aa)) is the LCN-type CS-alpha/beta domain. Disulfide bonds link Cys-26–Cys-77, Cys-30–Cys-50, Cys-36–Cys-60, and Cys-40–Cys-62. Residue Arg-79 is a propeptide, removed by a carboxypeptidase.

Belongs to the long (4 C-C) scorpion toxin superfamily. Sodium channel inhibitor family. Alpha subfamily. Expressed by the venom gland.

The protein localises to the secreted. Binds to sodium channels (Nav) and inhibits the inactivation of the activated channels, thereby blocking neuronal transmission. This toxin is active against mammals. The sequence is that of Neurotoxin BmK-M9 from Olivierus martensii (Manchurian scorpion).